The chain runs to 155 residues: 2-C-methyl-D-erythritol 2,4-cyclodiphosphate synthase (155 aa).

A divalent metal cation contacts are provided by Asp8 and His10. 4-CDP-2-C-methyl-D-erythritol 2-phosphate contacts are provided by residues 8–10 (DVH) and 34–35 (HS). An a divalent metal cation-binding site is contributed by His42. 4-CDP-2-C-methyl-D-erythritol 2-phosphate contacts are provided by residues 56–58 (DIG), 61–65 (FPDSD), 100–106 (AQKPKML), 132–135 (TTEE), Phe139, and Lys142.

This sequence belongs to the IspF family. As to quaternary structure, homotrimer. Requires a divalent metal cation as cofactor.

The catalysed reaction is 4-CDP-2-C-methyl-D-erythritol 2-phosphate = 2-C-methyl-D-erythritol 2,4-cyclic diphosphate + CMP. Its pathway is isoprenoid biosynthesis; isopentenyl diphosphate biosynthesis via DXP pathway; isopentenyl diphosphate from 1-deoxy-D-xylulose 5-phosphate: step 4/6. Functionally, involved in the biosynthesis of isopentenyl diphosphate (IPP) and dimethylallyl diphosphate (DMAPP), two major building blocks of isoprenoid compounds. Catalyzes the conversion of 4-diphosphocytidyl-2-C-methyl-D-erythritol 2-phosphate (CDP-ME2P) to 2-C-methyl-D-erythritol 2,4-cyclodiphosphate (ME-CPP) with a corresponding release of cytidine 5-monophosphate (CMP). The protein is 2-C-methyl-D-erythritol 2,4-cyclodiphosphate synthase of Clostridium botulinum (strain Okra / Type B1).